The primary structure comprises 466 residues: Probable Xaa-Pro aminopeptidase pepP (466 aa).

Asp264, Asp275, Glu398, and Glu438 together coordinate Mn(2+).

The protein belongs to the peptidase M24B family. It depends on Mn(2+) as a cofactor.

It catalyses the reaction Release of any N-terminal amino acid, including proline, that is linked to proline, even from a dipeptide or tripeptide.. Functionally, catalyzes the removal of a penultimate prolyl residue from the N-termini of peptides. The sequence is that of Probable Xaa-Pro aminopeptidase pepP (pepP) from Aspergillus clavatus (strain ATCC 1007 / CBS 513.65 / DSM 816 / NCTC 3887 / NRRL 1 / QM 1276 / 107).